The following is a 152-amino-acid chain: Arginine repressor (152 aa).

Belongs to the ArgR family.

The protein resides in the cytoplasm. The protein operates within amino-acid biosynthesis; L-arginine biosynthesis [regulation]. Its function is as follows. Regulates arginine biosynthesis genes. This chain is Arginine repressor, found in Thermotoga sp. (strain RQ2).